Here is a 166-residue protein sequence, read N- to C-terminus: MFLRSIFQTLCAVSFLAGSVFADSGVSIVSTPATTTVYLVRTVDCSSSEVTSQPVVTVYNVLKPDTVTFTVTETAGSYAKRSIEIDSDSVSPTSATTTTPVASATDVSVYSASIHVPTGNPPVDTHNPLSYDTEVTATTTFSIALPKFNKGDRVSSANTYSVSFVA.

The first 22 residues, 1 to 22 (MFLRSIFQTLCAVSFLAGSVFA), serve as a signal peptide directing secretion.

The protein resides in the endoplasmic reticulum. The polypeptide is Protein adg1 (adg1) (Schizosaccharomyces pombe (strain 972 / ATCC 24843) (Fission yeast)).